Consider the following 232-residue polypeptide: 7-cyano-7-deazaguanine synthase (232 aa).

Residue 11-21 participates in ATP binding; it reads ASGGMDSATAA. Residues Cys-192, Cys-200, Cys-203, and Cys-206 each coordinate Zn(2+).

The protein belongs to the QueC family. Zn(2+) is required as a cofactor.

The catalysed reaction is 7-carboxy-7-deazaguanine + NH4(+) + ATP = 7-cyano-7-deazaguanine + ADP + phosphate + H2O + H(+). It participates in purine metabolism; 7-cyano-7-deazaguanine biosynthesis. Functionally, catalyzes the ATP-dependent conversion of 7-carboxy-7-deazaguanine (CDG) to 7-cyano-7-deazaguanine (preQ(0)). This chain is 7-cyano-7-deazaguanine synthase, found in Haloarcula marismortui (strain ATCC 43049 / DSM 3752 / JCM 8966 / VKM B-1809) (Halobacterium marismortui).